A 101-amino-acid chain; its full sequence is NAD(P)H-quinone oxidoreductase subunit 4L, chloroplastic (101 aa).

Transmembrane regions (helical) follow at residues 2–22 (MFEH…YGLI), 32–52 (ICLE…SDLF), and 61–81 (IFAI…LSIL).

This sequence belongs to the complex I subunit 4L family. As to quaternary structure, NDH is composed of at least 16 different subunits, 5 of which are encoded in the nucleus.

The protein localises to the plastid. It localises to the chloroplast thylakoid membrane. It carries out the reaction a plastoquinone + NADH + (n+1) H(+)(in) = a plastoquinol + NAD(+) + n H(+)(out). The enzyme catalyses a plastoquinone + NADPH + (n+1) H(+)(in) = a plastoquinol + NADP(+) + n H(+)(out). In terms of biological role, NDH shuttles electrons from NAD(P)H:plastoquinone, via FMN and iron-sulfur (Fe-S) centers, to quinones in the photosynthetic chain and possibly in a chloroplast respiratory chain. The immediate electron acceptor for the enzyme in this species is believed to be plastoquinone. Couples the redox reaction to proton translocation, and thus conserves the redox energy in a proton gradient. This chain is NAD(P)H-quinone oxidoreductase subunit 4L, chloroplastic, found in Agrostis stolonifera (Creeping bentgrass).